Consider the following 471-residue polypeptide: ATP synthase subunit beta (471 aa).

152 to 159 (GGAGVGKT) is a binding site for ATP.

The protein belongs to the ATPase alpha/beta chains family. As to quaternary structure, F-type ATPases have 2 components, CF(1) - the catalytic core - and CF(0) - the membrane proton channel. CF(1) has five subunits: alpha(3), beta(3), gamma(1), delta(1), epsilon(1). CF(0) has three main subunits: a(1), b(2) and c(9-12). The alpha and beta chains form an alternating ring which encloses part of the gamma chain. CF(1) is attached to CF(0) by a central stalk formed by the gamma and epsilon chains, while a peripheral stalk is formed by the delta and b chains.

It is found in the cell membrane. It catalyses the reaction ATP + H2O + 4 H(+)(in) = ADP + phosphate + 5 H(+)(out). Produces ATP from ADP in the presence of a proton gradient across the membrane. The catalytic sites are hosted primarily by the beta subunits. The sequence is that of ATP synthase subunit beta from Herpetosiphon aurantiacus (strain ATCC 23779 / DSM 785 / 114-95).